A 263-amino-acid polypeptide reads, in one-letter code: Phosphatidylglycerol--prolipoprotein diacylglyceryl transferase (263 aa).

The next 4 membrane-spanning stretches (helical) occupy residues 6–26 (VIFS…VLGI), 50–70 (LLTA…VLIY), 85–105 (TWEG…AVII), and 112–132 (IPIF…LFLG). A 1,2-diacyl-sn-glycero-3-phospho-(1'-sn-glycerol) is bound at residue arginine 133. Transmembrane regions (helical) follow at residues 169 to 189 (LYEA…LFFL), 197 to 217 (GALT…VEFF), and 233 to 253 (MGQL…LGAL).

Belongs to the Lgt family.

The protein resides in the cell membrane. It catalyses the reaction L-cysteinyl-[prolipoprotein] + a 1,2-diacyl-sn-glycero-3-phospho-(1'-sn-glycerol) = an S-1,2-diacyl-sn-glyceryl-L-cysteinyl-[prolipoprotein] + sn-glycerol 1-phosphate + H(+). It functions in the pathway protein modification; lipoprotein biosynthesis (diacylglyceryl transfer). Functionally, catalyzes the transfer of the diacylglyceryl group from phosphatidylglycerol to the sulfhydryl group of the N-terminal cysteine of a prolipoprotein, the first step in the formation of mature lipoproteins. This chain is Phosphatidylglycerol--prolipoprotein diacylglyceryl transferase, found in Wolbachia sp. subsp. Drosophila simulans (strain wRi).